Here is a 210-residue protein sequence, read N- to C-terminus: Keratin-associated protein 26-1 (210 aa).

The protein belongs to the PMG family. In terms of assembly, interacts with hair keratins. Localized high up in the well differentiated portion of the hair follicle cuticle (about 10-15 cell layers above the apex of the dermal papilla).

In the hair cortex, hair keratin intermediate filaments are embedded in an interfilamentous matrix, consisting of hair keratin-associated proteins (KRTAP), which are essential for the formation of a rigid and resistant hair shaft through their extensive disulfide bond cross-linking with abundant cysteine residues of hair keratins. The matrix proteins include the high-sulfur and high-glycine-tyrosine keratins. The protein is Keratin-associated protein 26-1 (KRTAP26-1) of Homo sapiens (Human).